The primary structure comprises 594 residues: Grainyhead-like protein 3 homolog (594 aa).

Transcription activation stretches follow at residues 25–75 and 28–91; these read NDDE…RIIT and EAWS…SCIE. Residues 220–453 form the Grh/CP2 DB domain; that stretch reads ANRDFECTLE…DMETHPVLFI (234 aa). The tract at residues 483-503 is disordered; that stretch reads SSQSFPESFEAPPSKQQTNED.

It belongs to the grh/CP2 family. Grainyhead subfamily.

The protein localises to the nucleus. Functionally, transcription factor playing important roles in primary neurulation and in the differentiation of stratified epithelia of both ectodermal and endodermal origin. Binds directly to the consensus DNA sequence 5'-AACCGGTT-3' acting as an activator and repressor on distinct target genes. The polypeptide is Grainyhead-like protein 3 homolog (grhl3) (Xenopus tropicalis (Western clawed frog)).